The sequence spans 270 residues: Tryptophan synthase alpha chain (270 aa).

Catalysis depends on proton acceptor residues Glu51 and Asp62.

This sequence belongs to the TrpA family. As to quaternary structure, tetramer of two alpha and two beta chains.

The catalysed reaction is (1S,2R)-1-C-(indol-3-yl)glycerol 3-phosphate + L-serine = D-glyceraldehyde 3-phosphate + L-tryptophan + H2O. Its pathway is amino-acid biosynthesis; L-tryptophan biosynthesis; L-tryptophan from chorismate: step 5/5. The alpha subunit is responsible for the aldol cleavage of indoleglycerol phosphate to indole and glyceraldehyde 3-phosphate. The sequence is that of Tryptophan synthase alpha chain from Methanothermobacter thermautotrophicus (strain ATCC 29096 / DSM 1053 / JCM 10044 / NBRC 100330 / Delta H) (Methanobacterium thermoautotrophicum).